Here is a 357-residue protein sequence, read N- to C-terminus: 3'(2'),5'-bisphosphate nucleotidase (357 aa).

Catalysis depends on aspartate 49, which acts as the Proton acceptor. Mg(2+)-binding residues include glutamate 72, aspartate 142, isoleucine 144, and aspartate 145. Threonine 147 acts as the Proton acceptor in catalysis. Adenosine 3',5'-bisphosphate-binding residues include threonine 147, histidine 241, serine 264, lysine 267, arginine 281, and aspartate 294. AMP contacts are provided by histidine 241, serine 264, lysine 267, arginine 281, and aspartate 294. Residue aspartate 294 participates in Mg(2+) binding.

Belongs to the inositol monophosphatase superfamily. Requires Mg(2+) as cofactor.

The protein resides in the cytoplasm. It is found in the nucleus. The enzyme catalyses 3'-phosphoadenylyl sulfate + H2O = adenosine 5'-phosphosulfate + phosphate. It catalyses the reaction adenosine 3',5'-bisphosphate + H2O = AMP + phosphate. The catalysed reaction is adenosine 2',5'-bisphosphate + H2O = AMP + phosphate. Its activity is regulated as follows. Phosphatase activity is very sensitive to lithium and moderately sensitive to sodium. The inhibitory effects of lithium and sodium are overcome by high concentrations of potassium. Lithium exerts its inhibitory action by blocking the products of the PAP hydrolysis at the active site. Functionally, phosphatase that converts adenosine 3'-phosphate 5'-phosphosulfate (PAPS) to adenosine 5'-phosphosulfate (APS) and 3'(2')-phosphoadenosine 5'-phosphate (PAP) to AMP. May regulate the flux of sulfur in the sulfur-activation pathway by converting PAPS to APS. Involved in salt tolerance. Confers resistance to lithium. Shows no activity on inositol mono- and diphosphates, 3'-AMP, AMP, nicotinamide adenine dinucleotide phosphate (NADP), and p-nitrophenylphosphate. The sequence is that of 3'(2'),5'-bisphosphate nucleotidase (MET22) from Saccharomyces cerevisiae (strain ATCC 204508 / S288c) (Baker's yeast).